The chain runs to 350 residues: Cephaeline 6'-O-methyltransferase CiOMT (350 aa).

Residues Gly193, Asp216, Asp236, Met237, and Lys250 each contribute to the S-adenosyl-L-methionine site. Residue His254 is the Proton acceptor of the active site.

Belongs to the class I-like SAM-binding methyltransferase superfamily. Cation-independent O-methyltransferase family.

It localises to the cytoplasm. Its subcellular location is the cytosol. It carries out the reaction 7'-O-demethylcephaeline + S-adenosyl-L-methionine = cephaeline + S-adenosyl-L-homocysteine + H(+). It catalyses the reaction cephaeline + S-adenosyl-L-methionine = emetine + S-adenosyl-L-homocysteine + H(+). Its pathway is alkaloid biosynthesis. Inhibited by Co(2+), Ni(2+), Zn(2+) and Mn(2+) ions. In terms of biological role, O-methyltransferase involved in the biosynthesis of ipecac and benzylisoquinoline monoterpenoid-isoquinoline alkaloids natural products, starting by the condensation of dopamine and secologanin, and including emetine and cephaeline, drugs used both as anti-protozoal (e.g. treatment of ameobiasis) and as emetic agents. Catalyzes successively the 7'-O-methylation of 7'-O-demethylcephaeline to produce cephaeline, and its 6'-O-methylation to produce emetine. The sequence is that of Cephaeline 6'-O-methyltransferase CiOMT from Carapichea ipecacuanha (Ipecac).